A 94-amino-acid polypeptide reads, in one-letter code: Large ribosomal subunit protein uL23 (94 aa).

Belongs to the universal ribosomal protein uL23 family. In terms of assembly, part of the 50S ribosomal subunit. Contacts protein L29, and trigger factor when it is bound to the ribosome.

In terms of biological role, one of the early assembly proteins it binds 23S rRNA. One of the proteins that surrounds the polypeptide exit tunnel on the outside of the ribosome. Forms the main docking site for trigger factor binding to the ribosome. The protein is Large ribosomal subunit protein uL23 of Ligilactobacillus salivarius (strain UCC118) (Lactobacillus salivarius).